The following is a 78-amino-acid chain: Delta-conotoxin-like CVIE (78 aa).

The signal sequence occupies residues 1 to 22; that stretch reads MKLTCMMIVAVLFLTAWTFVTA. Positions 23–49 are excised as a propeptide; the sequence is DDSRNGLKNLFPKARHEMKNPEASKLN. 3 disulfide bridges follow: cysteine 54-cysteine 69, cysteine 61-cysteine 73, and cysteine 68-cysteine 77. Residue proline 65 is modified to 4-hydroxyproline.

The protein belongs to the conotoxin O1 superfamily. Expressed by the venom duct.

The protein resides in the secreted. In terms of biological role, delta-conotoxins bind to site 6 of voltage-gated sodium channels (Nav) and inhibit the inactivation process. This chain is Delta-conotoxin-like CVIE, found in Conus catus (Cat cone).